Reading from the N-terminus, the 429-residue chain is 5-methylthioadenosine/S-adenosylhomocysteine deaminase (429 aa).

Residues H66 and H68 each contribute to the Zn(2+) site. The substrate site is built by E95, R147, R158, and H181. H208 lines the Zn(2+) pocket. Residues E211 and D296 each coordinate substrate. D296 lines the Zn(2+) pocket.

It belongs to the metallo-dependent hydrolases superfamily. MTA/SAH deaminase family. The cofactor is Zn(2+).

It catalyses the reaction S-adenosyl-L-homocysteine + H2O + H(+) = S-inosyl-L-homocysteine + NH4(+). It carries out the reaction S-methyl-5'-thioadenosine + H2O + H(+) = S-methyl-5'-thioinosine + NH4(+). Functionally, catalyzes the deamination of 5-methylthioadenosine and S-adenosyl-L-homocysteine into 5-methylthioinosine and S-inosyl-L-homocysteine, respectively. Is also able to deaminate adenosine. This is 5-methylthioadenosine/S-adenosylhomocysteine deaminase from Caldicellulosiruptor saccharolyticus (strain ATCC 43494 / DSM 8903 / Tp8T 6331).